The primary structure comprises 470 residues: UDP-glycosyltransferase 75C1 (470 aa).

The Proton acceptor role is filled by histidine 16. An anthocyanidin is bound at residue histidine 16. Residues glutamine 347, histidine 362, tryptophan 365, asparagine 366, serine 367, glutamate 370, aspartate 386, and glutamine 387 each contribute to the UDP-alpha-D-glucose site.

This sequence belongs to the UDP-glycosyltransferase family. In terms of tissue distribution, expressed in flowers and fruits, especially in pulp, and, at lower levels, in seeds.

Its subcellular location is the cytoplasm. It is found in the nucleus. The enzyme catalyses 2-cis-(+)-abscisate + UDP-alpha-D-glucose = beta-D-glucopyranosyl cis-(+)-abscisate + UDP. The catalysed reaction is (indol-3-yl)acetate + UDP-alpha-D-glucose = 1-O-(indol-3-ylacetyl)-beta-D-glucose + UDP. Glucosyltransferase acting on both abscisic acid (ABA) and auxin (IAA). Required for ABA-mediated fruit ripening, seed germination, and negative responses to drought. This chain is UDP-glycosyltransferase 75C1, found in Solanum lycopersicum (Tomato).